The following is a 125-amino-acid chain: MINAPRVCVQVQSFYVESQSEPDEERFVFAYTITVRNLGRHEVQLLGRYWLITNGNGRQTEVQGEGVVGEQPIIHPGSEFQYTSGAVIETPLGTMEGHYHMTDHQGKAFQVSIPVFRLAIPSLIH.

One can recognise an ApaG domain in the interval 1–125 (MINAPRVCVQ…FRLAIPSLIH (125 aa)).

This is Protein ApaG from Pectobacterium carotovorum subsp. carotovorum (strain PC1).